The following is a 653-amino-acid chain: Cell wall adhesin EAP1 (653 aa).

The signal sequence occupies residues 1–18 (MKVSQILPLAGAISVASG). The segment at 19–146 (FWIPDFSNKQ…EYTTYCPLTS (128 aa)) is N-terminal cell-cell adhesion domain. Residues 144-267 (LTSTPATEST…TETASSTPVE (124 aa)) form a disordered region. Residues 145-267 (TSTPATESTP…TETASSTPVE (123 aa)) show a composition bias toward low complexity. 15 consecutive repeat copies span residues 147-152 (TPATES), 153-158 (TPATES), 159-164 (TPATES), 165-170 (TPATES), 171-176 (TPATES), 177-182 (TPATES), 192-197 (TPATES), 198-203 (TPATES), 204-209 (TPATES), 210-215 (TPATES), 216-221 (TPATES), 222-227 (TPATES), 228-233 (TPATES), 234-248 (TPATESTPCTTSTET), and 249-254 (TPATES). Residues 147–254 (TPATESTPAT…STETTPATES (108 aa)) form a 15 X 6 AA tandem repeats, Ser/Thr-rich region. The N-linked (GlcNAc...) asparagine glycan is linked to asparagine 323. Disordered regions lie at residues 324 to 540 (TSTP…TTQP) and 572 to 595 (EGGCVPEGQQTETSPSVPTNGPEV). A run of 10 repeats spans residues 326–345 (TPAAPGTPVESQPVIPGTET), 346–365 (TPAAPGTPVESQPVIPGTET), 366–389 (TPAAPGTPVESQPATTPVAPGTET), 390–413 (TPAAPGTPVESQPATTPVAPGTET), 414–433 (TPAAPGTPVESQPVIPGTET), 434–457 (TPAAPGTPVESQPATTPVAPGTET), 458–477 (TPAAPGTPVESQPVIPGTET), 478–501 (TPAAPGTPVESQPATTPVAPGTET), 502–521 (TPAAPGTPVESQPVIPGTET), and 522–541 (TPAAPGTPGTEATPVTTQPV). A 10 X 20 AA approximate tandem repeats region spans residues 326–541 (TPAAPGTPVE…EATPVTTQPV (216 aa)). Composition is skewed to low complexity over residues 341 to 353 (PGTETTPAAPGTP) and 361 to 538 (PGTE…PVTT). The span at 579–590 (GQQTETSPSVPT) shows a compositional bias: polar residues. A lipid anchor (GPI-anchor amidated glycine) is attached at glycine 632. Residues 633 to 653 (SGSALKKPYYGLAVAALVYFM) constitute a propeptide, removed in mature form.

The protein belongs to the PGA18 family. Post-translationally, the GPI-anchor is attached to the protein in the endoplasmic reticulum and serves to target the protein to the cell surface. There, the glucosamine-inositol phospholipid moiety is cleaved off and the GPI-modified mannoprotein is covalently attached via its lipidless GPI glycan remnant to the 1,6-beta-glucan of the outer cell wall layer.

Its subcellular location is the secreted. It localises to the cell wall. It is found in the membrane. Its function is as follows. Cell wall protein which mediates cell-cell and cell-substrate adhesion. Required for biofilm formation and plays a role in virulence. The sequence is that of Cell wall adhesin EAP1 (EAP1) from Candida albicans (strain SC5314 / ATCC MYA-2876) (Yeast).